A 205-amino-acid polypeptide reads, in one-letter code: Thiamine-phosphate synthase (205 aa).

Residues glutamine 37–lysine 41 and asparagine 69 each bind 4-amino-2-methyl-5-(diphosphooxymethyl)pyrimidine. Residues aspartate 70 and aspartate 89 each contribute to the Mg(2+) site. Serine 108 contacts 4-amino-2-methyl-5-(diphosphooxymethyl)pyrimidine. Threonine 134 to serine 136 lines the 2-[(2R,5Z)-2-carboxy-4-methylthiazol-5(2H)-ylidene]ethyl phosphate pocket. Lysine 137 lines the 4-amino-2-methyl-5-(diphosphooxymethyl)pyrimidine pocket. Residues glycine 165 and isoleucine 185–serine 186 each bind 2-[(2R,5Z)-2-carboxy-4-methylthiazol-5(2H)-ylidene]ethyl phosphate.

It belongs to the thiamine-phosphate synthase family. It depends on Mg(2+) as a cofactor.

It carries out the reaction 2-[(2R,5Z)-2-carboxy-4-methylthiazol-5(2H)-ylidene]ethyl phosphate + 4-amino-2-methyl-5-(diphosphooxymethyl)pyrimidine + 2 H(+) = thiamine phosphate + CO2 + diphosphate. It catalyses the reaction 2-(2-carboxy-4-methylthiazol-5-yl)ethyl phosphate + 4-amino-2-methyl-5-(diphosphooxymethyl)pyrimidine + 2 H(+) = thiamine phosphate + CO2 + diphosphate. The enzyme catalyses 4-methyl-5-(2-phosphooxyethyl)-thiazole + 4-amino-2-methyl-5-(diphosphooxymethyl)pyrimidine + H(+) = thiamine phosphate + diphosphate. The protein operates within cofactor biosynthesis; thiamine diphosphate biosynthesis; thiamine phosphate from 4-amino-2-methyl-5-diphosphomethylpyrimidine and 4-methyl-5-(2-phosphoethyl)-thiazole: step 1/1. Its function is as follows. Condenses 4-methyl-5-(beta-hydroxyethyl)thiazole monophosphate (THZ-P) and 2-methyl-4-amino-5-hydroxymethyl pyrimidine pyrophosphate (HMP-PP) to form thiamine monophosphate (TMP). The polypeptide is Thiamine-phosphate synthase (Clostridium botulinum (strain 657 / Type Ba4)).